Reading from the N-terminus, the 354-residue chain is Probable trehalose-phosphate phosphatase E (354 aa).

The protein belongs to the trehalose phosphatase family. A divalent metal cation is required as a cofactor.

The enzyme catalyses alpha,alpha-trehalose 6-phosphate + H2O = alpha,alpha-trehalose + phosphate. It functions in the pathway glycan biosynthesis; trehalose biosynthesis. Removes the phosphate from trehalose 6-phosphate to produce free trehalose. Trehalose accumulation in plant may improve abiotic stress tolerance. The chain is Probable trehalose-phosphate phosphatase E (TPPE) from Arabidopsis thaliana (Mouse-ear cress).